The following is a 178-amino-acid chain: UPF0232 protein cgR_0005 (178 aa).

Residues 16–55 (AMRRNGSVPDLNKNDAFRRPPAPKGGVEKRKKGRASGLDG) are disordered.

The protein belongs to the UPF0232 family.

This chain is UPF0232 protein cgR_0005, found in Corynebacterium glutamicum (strain R).